Here is a 759-residue protein sequence, read N- to C-terminus: Glycerol-3-phosphate O-acyltransferase 1 (759 aa).

Residues 1-48 (MPAPKLTEKFASSKSTQKTTNYSSIEAKSVKTSADQAYIYQEPSATKK) lie on the Lumenal side of the membrane. A helical membrane pass occupies residues 49–69 (ILYSIATWLLYNIFHCFFREI). Topologically, residues 70 to 434 (RGRGSFKVPQ…AKVNFAKNLG (365 aa)) are cytoplasmic. An HXXXXD motif motif is present at residues 414 to 419 (HYNLPD). Residues 435 to 449 (LVFFRSIGLCILFSL) traverse the membrane as a helical segment. Alanine 450 is a topological domain (lumenal). A helical membrane pass occupies residues 451–465 (MPGIIMFSPVFILAK). The Cytoplasmic segment spans residues 466–493 (RISQEKARTALSKSTVKIKANDVIATWK). Residues 494–514 (ILIGMGFAPLLYIFWSVLITY) form a helical membrane-spanning segment. Over 515–523 (YLRHKPWNK) the chain is Lumenal. The helical transmembrane segment at 524–544 (IYVFSGSYISCVIVTYSALIV) threads the bilayer. Over 545 to 759 (GDIGMDGFKS…EEEEGKEGDA (215 aa)) the chain is Cytoplasmic. Disordered regions lie at residues 613-667 (EEDR…SLVN), 684-705 (RKSE…EFEV), and 729-759 (IGEN…EGDA). Residues 647 to 659 (RDNHDAYEHHNQD) are compositionally biased toward basic and acidic residues. Positions 688 to 702 (SSLASTSVAPSSSSE) are enriched in low complexity. A compositionally biased stretch (acidic residues) spans 736-759 (EEEEEEEEEEEEEEEEEEGKEGDA).

The protein belongs to the GPAT/DAPAT family.

Its subcellular location is the endoplasmic reticulum membrane. It carries out the reaction sn-glycerol 3-phosphate + an acyl-CoA = a 1-acyl-sn-glycero-3-phosphate + CoA. The catalysed reaction is dihydroxyacetone phosphate + an acyl-CoA = a 1-acylglycerone 3-phosphate + CoA. The enzyme catalyses sn-glycerol 3-phosphate + hexadecanoyl-CoA = 1-hexadecanoyl-sn-glycero-3-phosphate + CoA. It catalyses the reaction (9Z)-hexadecenoyl-CoA + sn-glycerol 3-phosphate = 1-(9Z-hexadecenoyl)-sn-glycero-3-phosphate + CoA. It carries out the reaction sn-glycerol 3-phosphate + octadecanoyl-CoA = 1-octadecanoyl-sn-glycero-3-phosphate + CoA. The catalysed reaction is sn-glycerol 3-phosphate + (9Z)-octadecenoyl-CoA = 1-(9Z-octadecenoyl)-sn-glycero-3-phosphate + CoA. Its pathway is phospholipid metabolism; CDP-diacylglycerol biosynthesis; CDP-diacylglycerol from sn-glycerol 3-phosphate: step 1/3. Functionally, dual substrate-specific glycerol-3-phosphate/dihydroxyacetone phosphate sn-1 acyltransferase, catalyzing the first and committed reaction in the de novo synthesis of glycerophospholipids and triacylglycerols (TAGs). Prefers Gly-3-P over dihydroxyacetone phosphate and has a marked preference for 16-carbon fatty acyl chains. Transfers a fatty acid from fatty acyl-CoA to the sn-1 position of glycerol-3-phosphate to produce lysophosphatidic acid (LysoPA). These lipids not only are precursors of glycerolipids, but also are dynamic components of signal transduction systems that control cell physiology. SCT1 is the primary supplier of diacylglycerols (DAG), used mainly in TAG synthesis and phosphatidylcholine (PC) synthesis through the CDP-choline pathway. Regulates fatty acid desaturation, that is, the ratio of unsaturated versus saturated fatty acyl chains, by competing with the desaturase OLE1 for the common substrate C16:0-CoA. Sequesters C16:0-CoA into lipids, thereby shielding it from desaturation by OLE1. The chain is Glycerol-3-phosphate O-acyltransferase 1 from Saccharomyces cerevisiae (strain ATCC 204508 / S288c) (Baker's yeast).